The chain runs to 178 residues: MQSADNLIWIDLEMTGLDVDSCKIIEIAAIITDKDLNIIAEAEPIAIYQPDEVLANMNEWCIKTHTETGLTQRVKDSKISTEAAEQQILEFIRKFVPYQSSPLCGNSIWQDRRFLAKYMPNIDEYCHYRMLDVTTLKLLNQYWGDGKSFEKKNTHKALDDIRESIAELKFYRQKLLSI.

Residues 7 to 168 (LIWIDLEMTG…DDIRESIAEL (162 aa)) form the Exonuclease domain. Residue Y128 is part of the active site.

This sequence belongs to the oligoribonuclease family.

The protein resides in the cytoplasm. In terms of biological role, 3'-to-5' exoribonuclease specific for small oligoribonucleotides. In Francisella tularensis subsp. holarctica (strain FTNF002-00 / FTA), this protein is Oligoribonuclease.